We begin with the raw amino-acid sequence, 618 residues long: MILQNRTFDLNPNDIAGLELVCQTLRNRILEVVSANGGHLSSSLGAVELIVGMHALFDCQKNPFIFDTSHQAYAHKLLTGRFESFSTLRQFKGLSGFTKPSESAYDYFIAGHSSTSVSIGVGVAKAFCLKQALGMPIALLGDGSISAGIFYEALNELGDRKYPMIMILNDNEMSISTPIGALSKALSQLMKGPFYQSFRSKVKKILSTLPESVNYLASRFEESFKLITPGVFFEELGINYIGPINGHDLSAIIETLKLAKELKEPVLIHAQTLKGKGYKIAEGRYEKWHGVGPFDLDTGLSKKSKSAILSPTEAYSNTLLELAKKDEKIVGVTAAMPSGTGLDKLIDAYPLRFFDVAIAEQHALTSSSAMAKEGFKPFVSIYSTFLQRAYDSIVHDACISSLPIKLAIDRAGIVGEDGETHQGLLDVSYLRSIPNMVIFAPRDNETLKNAVRFANEHDSSPCAFRYPRGSFVLKEGVFEPSGFVLGQSELLKKEGEILLIGYGNGVGRAHLVQLALKEKNIECALLDLRFLKPLDPNLSAIVAPYQKLYVFSDNYKLGGVASAILEFLSEQNILKPVKSFEIIDEFIMHGNTALVEKSLGLDTESLTDAILKDLGQER.

Residues His70 and 111 to 113 each bind thiamine diphosphate; that span reads GHS. Position 142 (Asp142) interacts with Mg(2+). Thiamine diphosphate contacts are provided by residues 143–144, Asn171, Tyr278, and Glu360; that span reads GS. Position 171 (Asn171) interacts with Mg(2+).

This sequence belongs to the transketolase family. DXPS subfamily. As to quaternary structure, homodimer. It depends on Mg(2+) as a cofactor. Thiamine diphosphate serves as cofactor.

It catalyses the reaction D-glyceraldehyde 3-phosphate + pyruvate + H(+) = 1-deoxy-D-xylulose 5-phosphate + CO2. The protein operates within metabolic intermediate biosynthesis; 1-deoxy-D-xylulose 5-phosphate biosynthesis; 1-deoxy-D-xylulose 5-phosphate from D-glyceraldehyde 3-phosphate and pyruvate: step 1/1. Functionally, catalyzes the acyloin condensation reaction between C atoms 2 and 3 of pyruvate and glyceraldehyde 3-phosphate to yield 1-deoxy-D-xylulose-5-phosphate (DXP). The chain is 1-deoxy-D-xylulose-5-phosphate synthase from Helicobacter pylori (strain G27).